We begin with the raw amino-acid sequence, 385 residues long: Lipid-A-disaccharide synthase 2 (385 aa).

It belongs to the LpxB family.

It catalyses the reaction a lipid X + a UDP-2-N,3-O-bis[(3R)-3-hydroxyacyl]-alpha-D-glucosamine = a lipid A disaccharide + UDP + H(+). It participates in bacterial outer membrane biogenesis; LPS lipid A biosynthesis. In terms of biological role, condensation of UDP-2,3-diacylglucosamine and 2,3-diacylglucosamine-1-phosphate to form lipid A disaccharide, a precursor of lipid A, a phosphorylated glycolipid that anchors the lipopolysaccharide to the outer membrane of the cell. The polypeptide is Lipid-A-disaccharide synthase 2 (Legionella pneumophila (strain Paris)).